The primary structure comprises 67 residues: Large ribosomal subunit protein bL35 (67 aa).

The protein belongs to the bacterial ribosomal protein bL35 family.

The protein is Large ribosomal subunit protein bL35 of Anaeromyxobacter sp. (strain Fw109-5).